The following is a 71-amino-acid chain: Bacteriocin carnobacteriocin-A (71 aa).

Residues 1–18 (MNNVKELSIKEMQQVTGG) constitute a propeptide that is removed on maturation. Cysteines 40 and 69 form a disulfide.

The protein localises to the secreted. Has antibacterial activity. This is Bacteriocin carnobacteriocin-A (cbnBA) from Carnobacterium maltaromaticum (Carnobacterium piscicola).